Here is a 122-residue protein sequence, read N- to C-terminus: Ribonuclease P protein component (122 aa).

The protein belongs to the RnpA family. As to quaternary structure, consists of a catalytic RNA component (M1 or rnpB) and a protein subunit.

The enzyme catalyses Endonucleolytic cleavage of RNA, removing 5'-extranucleotides from tRNA precursor.. In terms of biological role, RNaseP catalyzes the removal of the 5'-leader sequence from pre-tRNA to produce the mature 5'-terminus. It can also cleave other RNA substrates such as 4.5S RNA. The protein component plays an auxiliary but essential role in vivo by binding to the 5'-leader sequence and broadening the substrate specificity of the ribozyme. This chain is Ribonuclease P protein component, found in Lactobacillus johnsonii (strain CNCM I-12250 / La1 / NCC 533).